The sequence spans 417 residues: MAWLSFYLLNVLWAVAGTSTRAQRSCSVPPDQQPWVNGLQLLMENSVTESDLPNPSILIAMNLASTYNLEAQKLLTYQLMASDSADLTNGQLALTIMALTSSCRDPGSKVSILQKNMESWTPSNLGAESSSFYGPALAILALCQKNSEATLPIAVRFAKTLMMESSPFSVDTGAVATLALTCMYNRIPVGSQENYRDLFGQALKVIVDNISLRIKADGIIGDIYSTGLAMQALSVTPEQPTKEWDCEKTMYTILKEIKQGKFQNPMSIAQILPSLKGKTYLDVPQVTCGPDHEVPPTLTDYPTPVPTSISNITVIYTINNQLRGVDLLFNVTIEVSVKSGSVLLAVLEEAQRRNHMFKFETTMTSWGLIVSSINNIAENVKHKTYWEFLSGKTPLGEGVAYYIPFNYEHITANFTQY.

The first 18 residues, 1-18, serve as a signal peptide directing secretion; the sequence is MAWLSFYLLNVLWAVAGT. Intrachain disulfides connect Cys26/Cys246, Cys103/Cys288, and Cys143/Cys182. Asp171 provides a ligand contact to cob(II)alamin. Ser191 carries the phosphoserine modification. A glycan (N-linked (GlcNAc...) asparagine) is linked at Asn209. 2 residues coordinate cob(II)alamin: Asp222 and Gln270. 2 N-linked (GlcNAc...) asparagine glycosylation sites follow: Asn311 and Asn330. Residues 365-370 and 386-395 contribute to the cob(II)alamin site; these read SWGLIV and WEFLSGKTPL. N-linked (GlcNAc...) asparagine glycosylation occurs at Asn413.

Belongs to the eukaryotic cobalamin transport proteins family. In terms of assembly, interacts with CUBN (via CUB domains). The N-terminus is blocked. In terms of tissue distribution, gastric mucosa.

It localises to the secreted. Its function is as follows. Promotes absorption of the essential vitamin cobalamin (Cbl) in the ileum. After interaction with CUBN, the CBLIF-cobalamin complex is internalized via receptor-mediated endocytosis. The sequence is that of Cobalamin binding intrinsic factor from Rattus norvegicus (Rat).